A 375-amino-acid chain; its full sequence is Aminomethyltransferase (375 aa).

The protein belongs to the GcvT family. As to quaternary structure, the glycine cleavage system is composed of four proteins: P, T, L and H.

It catalyses the reaction N(6)-[(R)-S(8)-aminomethyldihydrolipoyl]-L-lysyl-[protein] + (6S)-5,6,7,8-tetrahydrofolate = N(6)-[(R)-dihydrolipoyl]-L-lysyl-[protein] + (6R)-5,10-methylene-5,6,7,8-tetrahydrofolate + NH4(+). Functionally, the glycine cleavage system catalyzes the degradation of glycine. This Cupriavidus necator (strain ATCC 17699 / DSM 428 / KCTC 22496 / NCIMB 10442 / H16 / Stanier 337) (Ralstonia eutropha) protein is Aminomethyltransferase.